The primary structure comprises 246 residues: Carboxy-S-adenosyl-L-methionine synthase (246 aa).

S-adenosyl-L-methionine-binding positions include tyrosine 39, glycine 64–serine 66, aspartate 89–asparagine 90, aspartate 117–isoleucine 118, asparagine 132, and arginine 199.

It belongs to the class I-like SAM-binding methyltransferase superfamily. Cx-SAM synthase family. Homodimer.

The catalysed reaction is prephenate + S-adenosyl-L-methionine = carboxy-S-adenosyl-L-methionine + 3-phenylpyruvate + H2O. Functionally, catalyzes the conversion of S-adenosyl-L-methionine (SAM) to carboxy-S-adenosyl-L-methionine (Cx-SAM). In Enterobacter sp. (strain 638), this protein is Carboxy-S-adenosyl-L-methionine synthase.